Here is a 313-residue protein sequence, read N- to C-terminus: Synaptophysin (313 aa).

Topologically, residues 1-25 (MLLLADMDVVNQLVAGGQFRVVKEP) are cytoplasmic. The MARVEL domain maps to 21–227 (VVKEPLGFVK…NLWFVFKETG (207 aa)). The chain crosses the membrane as a helical span at residues 26-49 (LGFVKVLQWVFAIFAFATCGSYSG). The Vesicular segment spans residues 50–106 (ELQLSVDCANKTKSDLNIEVEFEYPFRLHEVYFEAPTCQGDPKKIFLVGNYSSSAEF). The N-linked (GlcNAc...) asparagine glycan is linked to N59. A Phosphotyrosine modification is found at Y81. An N-linked (GlcNAc...) asparagine glycan is attached at N99. A helical transmembrane segment spans residues 107-130 (FVTVAVFAFLYSMGALATYIFLQN). The Cytoplasmic portion of the chain corresponds to 131–137 (KYRENNK). The chain crosses the membrane as a helical span at residues 138 to 161 (GPMLDFLATAVFAFMWLVSSSAWA). Residues 162–199 (KGLSDVKMATDPENIIKGMHVCHQPGNTCKELRDPVTS) lie on the Vesicular side of the membrane. The chain crosses the membrane as a helical span at residues 200-223 (GLNTSVVFGFLNLVLWVGNLWFVF). Over 224–313 (KETGWAAPFL…GAPTSFSNQM (90 aa)) the chain is Cytoplasmic. The disordered stretch occupies residues 238-313 (GAPEKQPAPG…GAPTSFSNQM (76 aa)). Positions 253–263 (AGYGQGPGGYG) are enriched in gly residues. Positions 254–304 (GYGQGPGGYGPQDSYGPQGGYQPDYGQPASSGGGGYGPQGDYGQQGYGPQG) are repeats, Gly/Tyr-rich. A compositionally biased stretch (low complexity) spans 264–283 (PQDSYGPQGGYQPDYGQPAS). The segment covering 284–302 (SGGGGYGPQGDYGQQGYGP) has biased composition (gly residues).

This sequence belongs to the synaptophysin/synaptobrevin family. Homohexamer or homotetramer. Interacts with SRCIN1. Interacts with VAMP2; the interaction is inhibited by interaction of VAPM2 with SEPT8. In terms of processing, ubiquitinated; mediated by SIAH1 or SIAH2 and leading to its subsequent proteasomal degradation. Post-translationally, phosphorylated by SRC. As to expression, characteristic of a type of small (30-80 nm) neurosecretory vesicles, including presynaptic vesicles, but also vesicles of various neuroendocrine cells of both neuronal and epithelial phenotype.

It localises to the cytoplasmic vesicle. The protein resides in the secretory vesicle. Its subcellular location is the synaptic vesicle membrane. It is found in the synapse. The protein localises to the synaptosome. In terms of biological role, possibly involved in structural functions as organizing other membrane components or in targeting the vesicles to the plasma membrane. Involved in the regulation of short-term and long-term synaptic plasticity. The chain is Synaptophysin (SYP) from Bos taurus (Bovine).